A 101-amino-acid polypeptide reads, in one-letter code: NADH-quinone oxidoreductase subunit K (101 aa).

The next 3 membrane-spanning stretches (helical) occupy residues 4–24 (LADY…GIFI), 30–50 (LVLL…FIAF), and 61–81 (VFVF…LAIV).

It belongs to the complex I subunit 4L family. In terms of assembly, NDH-1 is composed of 14 different subunits. Subunits NuoA, H, J, K, L, M, N constitute the membrane sector of the complex.

Its subcellular location is the cell inner membrane. It catalyses the reaction a quinone + NADH + 5 H(+)(in) = a quinol + NAD(+) + 4 H(+)(out). In terms of biological role, NDH-1 shuttles electrons from NADH, via FMN and iron-sulfur (Fe-S) centers, to quinones in the respiratory chain. The immediate electron acceptor for the enzyme in this species is believed to be ubiquinone. Couples the redox reaction to proton translocation (for every two electrons transferred, four hydrogen ions are translocated across the cytoplasmic membrane), and thus conserves the redox energy in a proton gradient. The chain is NADH-quinone oxidoreductase subunit K from Alkalilimnicola ehrlichii (strain ATCC BAA-1101 / DSM 17681 / MLHE-1).